Reading from the N-terminus, the 432-residue chain is Adenosylhomocysteinase (432 aa).

At serine 2 the chain carries N-acetylserine. Substrate contacts are provided by threonine 57, aspartate 131, and glutamate 156. Serine 183 carries the post-translational modification Phosphoserine. The interval 183–350 is NAD binding; sequence SVTKSKFDNL…EGRLVNLGCA (168 aa). Substrate-binding residues include lysine 186 and aspartate 190. Lysine 186 is modified (N6-(2-hydroxyisobutyryl)lysine). Position 193 is a phosphotyrosine (tyrosine 193).

This sequence belongs to the adenosylhomocysteinase family. Homotetramer. Interaction with AHCYL1. NAD(+) serves as cofactor.

Its subcellular location is the cytoplasm. It is found in the melanosome. The protein resides in the nucleus. The protein localises to the endoplasmic reticulum. The enzyme catalyses S-adenosyl-L-homocysteine + H2O = L-homocysteine + adenosine. It functions in the pathway amino-acid biosynthesis; L-homocysteine biosynthesis; L-homocysteine from S-adenosyl-L-homocysteine: step 1/1. In terms of biological role, catalyzes the hydrolysis of S-adenosyl-L-homocysteine to form adenosine and homocysteine. Binds copper ions. The sequence is that of Adenosylhomocysteinase (AHCY) from Sus scrofa (Pig).